Here is a 290-residue protein sequence, read N- to C-terminus: Acetyl-coenzyme A carboxylase carboxyl transferase subunit beta (290 aa).

Positions 27 to 290 (LWIKCPSCEA…LTRQPADAVA (264 aa)) constitute a CoA carboxyltransferase N-terminal domain. Zn(2+) is bound by residues C31, C34, C50, and C53. The C4-type zinc-finger motif lies at 31-53 (CPSCEAVLYRNDVEANLHVCPKC).

It belongs to the AccD/PCCB family. Acetyl-CoA carboxylase is a heterohexamer composed of biotin carboxyl carrier protein (AccB), biotin carboxylase (AccC) and two subunits each of ACCase subunit alpha (AccA) and ACCase subunit beta (AccD). Requires Zn(2+) as cofactor.

It localises to the cytoplasm. The enzyme catalyses N(6)-carboxybiotinyl-L-lysyl-[protein] + acetyl-CoA = N(6)-biotinyl-L-lysyl-[protein] + malonyl-CoA. The protein operates within lipid metabolism; malonyl-CoA biosynthesis; malonyl-CoA from acetyl-CoA: step 1/1. In terms of biological role, component of the acetyl coenzyme A carboxylase (ACC) complex. Biotin carboxylase (BC) catalyzes the carboxylation of biotin on its carrier protein (BCCP) and then the CO(2) group is transferred by the transcarboxylase to acetyl-CoA to form malonyl-CoA. This is Acetyl-coenzyme A carboxylase carboxyl transferase subunit beta from Paraburkholderia phymatum (strain DSM 17167 / CIP 108236 / LMG 21445 / STM815) (Burkholderia phymatum).